Here is a 184-residue protein sequence, read N- to C-terminus: Casparian strip membrane protein 3 (184 aa).

The Cytoplasmic segment spans residues 1–24 (MEGSEEHGETSKAPLSRGVSKGVS). The helical transmembrane segment at 25 to 45 (ILDVILRFVAIIGTLASAIAM) threads the bilayer. The Extracellular segment spans residues 46 to 72 (GTTNQTLPFFTQFIRFKAQYSDLPTLT). Residue Asn49 is glycosylated (N-linked (GlcNAc...) asparagine). A helical transmembrane segment spans residues 73-93 (FFVVANSIVSAYLILSLPLSI). The Cytoplasmic portion of the chain corresponds to 94 to 105 (VHVIRSRAKYSR). Residues 106 to 126 (LILIFFDAAMLALVTAGASAA) traverse the membrane as a helical segment. Residues 127 to 159 (AAIVYLAHKGNARANWLAICQQFDSFCERISGS) lie on the Extracellular side of the membrane. A helical transmembrane segment spans residues 160-180 (LIGSFAAMVVLVLLIFLSAIA). At 181–184 (LARR) the chain is on the cytoplasmic side.

This sequence belongs to the Casparian strip membrane proteins (CASP) family. Homodimer and heterodimers.

The protein localises to the cell membrane. Its function is as follows. Regulates membrane-cell wall junctions and localized cell wall deposition. Required for establishment of the Casparian strip membrane domain (CSD) and the subsequent formation of Casparian strips, a cell wall modification of the root endodermis that determines an apoplastic barrier between the intraorganismal apoplasm and the extraorganismal apoplasm and prevents lateral diffusion. The sequence is that of Casparian strip membrane protein 3 from Oryza sativa subsp. indica (Rice).